Here is a 274-residue protein sequence, read N- to C-terminus: 3-deoxy-manno-octulosonate cytidylyltransferase (274 aa).

Belongs to the KdsB family.

The protein localises to the cytoplasm. It catalyses the reaction 3-deoxy-alpha-D-manno-oct-2-ulosonate + CTP = CMP-3-deoxy-beta-D-manno-octulosonate + diphosphate. Its pathway is nucleotide-sugar biosynthesis; CMP-3-deoxy-D-manno-octulosonate biosynthesis; CMP-3-deoxy-D-manno-octulosonate from 3-deoxy-D-manno-octulosonate and CTP: step 1/1. It functions in the pathway bacterial outer membrane biogenesis; lipopolysaccharide biosynthesis. Activates KDO (a required 8-carbon sugar) for incorporation into bacterial lipopolysaccharide in Gram-negative bacteria. The protein is 3-deoxy-manno-octulosonate cytidylyltransferase of Bordetella avium (strain 197N).